The sequence spans 361 residues: sn-glycerol-3-phosphate import ATP-binding protein UgpC (361 aa).

Residues 4 to 235 (LSLKGVRKSY…PATVFVAGFI (232 aa)) form the ABC transporter domain. 37-44 (GPSGCGKS) is an ATP binding site.

Belongs to the ABC transporter superfamily. sn-glycerol-3-phosphate importer (TC 3.A.1.1.3) family. As to quaternary structure, the complex is composed of two ATP-binding proteins (UgpC), two transmembrane proteins (UgpA and UgpE) and a solute-binding protein (UgpB).

The protein localises to the cell inner membrane. The catalysed reaction is sn-glycerol 3-phosphate(out) + ATP + H2O = sn-glycerol 3-phosphate(in) + ADP + phosphate + H(+). In terms of biological role, part of the ABC transporter complex UgpBAEC involved in sn-glycerol-3-phosphate (G3P) import. Responsible for energy coupling to the transport system. This Burkholderia lata (strain ATCC 17760 / DSM 23089 / LMG 22485 / NCIMB 9086 / R18194 / 383) protein is sn-glycerol-3-phosphate import ATP-binding protein UgpC.